A 286-amino-acid chain; its full sequence is NAD kinase (286 aa).

Asp74 functions as the Proton acceptor in the catalytic mechanism. Residues 74 to 75, 148 to 149, Asp178, Ala186, 189 to 194, and Gln244 contribute to the NAD(+) site; these read DG, ND, and TAYNLS.

It belongs to the NAD kinase family. It depends on a divalent metal cation as a cofactor.

The protein localises to the cytoplasm. It catalyses the reaction NAD(+) + ATP = ADP + NADP(+) + H(+). Its function is as follows. Involved in the regulation of the intracellular balance of NAD and NADP, and is a key enzyme in the biosynthesis of NADP. Catalyzes specifically the phosphorylation on 2'-hydroxyl of the adenosine moiety of NAD to yield NADP. This chain is NAD kinase, found in Campylobacter jejuni subsp. doylei (strain ATCC BAA-1458 / RM4099 / 269.97).